The following is a 90-amino-acid chain: Small ribosomal subunit protein uS17 (90 aa).

Belongs to the universal ribosomal protein uS17 family. In terms of assembly, part of the 30S ribosomal subunit.

Functionally, one of the primary rRNA binding proteins, it binds specifically to the 5'-end of 16S ribosomal RNA. The protein is Small ribosomal subunit protein uS17 of Cutibacterium acnes (strain DSM 16379 / KPA171202) (Propionibacterium acnes).